A 73-amino-acid chain; its full sequence is UPF0435 protein BH2488 (73 aa).

Belongs to the UPF0435 family.

The polypeptide is UPF0435 protein BH2488 (Halalkalibacterium halodurans (strain ATCC BAA-125 / DSM 18197 / FERM 7344 / JCM 9153 / C-125) (Bacillus halodurans)).